We begin with the raw amino-acid sequence, 768 residues long: Glucoamylase S2 (768 aa).

The first 21 residues, 1 to 21 (MQRPFLLAYLVLSLLFNSALG), serve as a signal peptide directing secretion. Disordered stretches follow at residues 29–83 (RGSS…ETTI) and 125–149 (TTTVPCSTSPSETASESTTTSPTTP). The span at 30–48 (GSSSSNITSSGPSSTPFSS) shows a compositional bias: low complexity. A glycan (N-linked (GlcNAc...) asparagine) is linked at Asn35. A compositionally biased stretch (polar residues) spans 49 to 66 (ATESFSTGTTVTPSSSKY). 2 stretches are compositionally biased toward low complexity: residues 71 to 83 (TETSVSSTTETTI) and 131 to 149 (STSPSETASESTTTSPTTP). 5 N-linked (GlcNAc...) asparagine glycosylation sites follow: Asn309, Asn323, Asn415, Asn424, and Asn435. A h subunit region spans residues 349–692 (VSIERIFENI…ASTTLYQLIY (344 aa)). Trp456 is a binding site for substrate. Residue Asn514 is glycosylated (N-linked (GlcNAc...) asparagine). The active-site Proton acceptor is the Asp519. The Proton donor role is filled by Glu522. N-linked (GlcNAc...) asparagine glycosylation is found at Asn547, Asn646, Asn651, Asn721, and Asn742. The interval 693–768 (RHISEQHDLV…LKATWEQTGN (76 aa)) is y subunit.

It belongs to the glycosyl hydrolase 15 family.

It carries out the reaction Hydrolysis of terminal (1-&gt;4)-linked alpha-D-glucose residues successively from non-reducing ends of the chains with release of beta-D-glucose.. This chain is Glucoamylase S2 (STA2), found in Saccharomyces cerevisiae (Baker's yeast).